A 294-amino-acid polypeptide reads, in one-letter code: 33 kDa chaperonin (294 aa).

Disulfide bonds link cysteine 239/cysteine 241 and cysteine 272/cysteine 275.

This sequence belongs to the HSP33 family. Under oxidizing conditions two disulfide bonds are formed involving the reactive cysteines. Under reducing conditions zinc is bound to the reactive cysteines and the protein is inactive.

Its subcellular location is the cytoplasm. Redox regulated molecular chaperone. Protects both thermally unfolding and oxidatively damaged proteins from irreversible aggregation. Plays an important role in the bacterial defense system toward oxidative stress. This is 33 kDa chaperonin from Listeria monocytogenes serotype 4b (strain CLIP80459).